We begin with the raw amino-acid sequence, 337 residues long: tRNA N6-adenosine threonylcarbamoyltransferase (337 aa).

The Fe cation site is built by His-107 and His-111. Substrate-binding positions include Leu-129–Gly-133, Asp-162, Gly-175, and Asn-271. Asp-299 is a Fe cation binding site.

This sequence belongs to the KAE1 / TsaD family. Fe(2+) serves as cofactor.

The protein resides in the cytoplasm. The enzyme catalyses L-threonylcarbamoyladenylate + adenosine(37) in tRNA = N(6)-L-threonylcarbamoyladenosine(37) in tRNA + AMP + H(+). Required for the formation of a threonylcarbamoyl group on adenosine at position 37 (t(6)A37) in tRNAs that read codons beginning with adenine. Is involved in the transfer of the threonylcarbamoyl moiety of threonylcarbamoyl-AMP (TC-AMP) to the N6 group of A37, together with TsaE and TsaB. TsaD likely plays a direct catalytic role in this reaction. This chain is tRNA N6-adenosine threonylcarbamoyltransferase, found in Sulfurovum sp. (strain NBC37-1).